Here is a 134-residue protein sequence, read N- to C-terminus: Fluoride-specific ion channel FluC 2 (134 aa).

A run of 4 helical transmembrane segments spans residues 8–28 (IVAI…LNTW), 40–60 (IENI…LVIV), 69–89 (LGVG…DSVL), and 99–119 (LIYV…GYLL). Gly-75 and Thr-78 together coordinate Na(+).

It belongs to the fluoride channel Fluc/FEX (TC 1.A.43) family.

It localises to the cell membrane. The enzyme catalyses fluoride(in) = fluoride(out). With respect to regulation, na(+) is not transported, but it plays an essential structural role and its presence is essential for fluoride channel function. Its function is as follows. Fluoride-specific ion channel. Important for reducing fluoride concentration in the cell, thus reducing its toxicity. The polypeptide is Fluoride-specific ion channel FluC 2 (Halalkalibacterium halodurans (strain ATCC BAA-125 / DSM 18197 / FERM 7344 / JCM 9153 / C-125) (Bacillus halodurans)).